The chain runs to 293 residues: Probable porphobilinogen deaminase (293 aa).

C233 carries the S-(dipyrrolylmethanemethyl)cysteine modification.

This sequence belongs to the HMBS family. Requires dipyrromethane as cofactor.

The enzyme catalyses 4 porphobilinogen + H2O = hydroxymethylbilane + 4 NH4(+). The protein operates within porphyrin-containing compound metabolism; protoporphyrin-IX biosynthesis; coproporphyrinogen-III from 5-aminolevulinate: step 2/4. Its function is as follows. Tetrapolymerization of the monopyrrole PBG into the hydroxymethylbilane pre-uroporphyrinogen in several discrete steps. This Saccharolobus islandicus (strain Y.G.57.14 / Yellowstone #1) (Sulfolobus islandicus) protein is Probable porphobilinogen deaminase.